Reading from the N-terminus, the 1087-residue chain is Error-prone DNA polymerase 3 (1087 aa).

Residues 1040–1064 are disordered; that stretch reads AGRGDEFAHGSPGSSDTRDKSKPVV.

Belongs to the DNA polymerase type-C family. DnaE2 subfamily.

The protein resides in the cytoplasm. The enzyme catalyses DNA(n) + a 2'-deoxyribonucleoside 5'-triphosphate = DNA(n+1) + diphosphate. DNA polymerase involved in damage-induced mutagenesis and translesion synthesis (TLS). It is not the major replicative DNA polymerase. This is Error-prone DNA polymerase 3 from Agrobacterium fabrum (strain C58 / ATCC 33970) (Agrobacterium tumefaciens (strain C58)).